The primary structure comprises 305 residues: 2-pyrone-4,6-dicarbaxylate hydrolase (305 aa).

Residues 32–34 (HCH), Tyr-50, Thr-78, Arg-125, Arg-131, Tyr-158, and His-182 contribute to the substrate site. The Proton acceptor role is filled by Asp-258. Asn-263 serves as a coordination point for substrate.

It belongs to the metallo-dependent hydrolases superfamily. PDC hydrolase family.

It catalyses the reaction 2-oxo-2H-pyran-4,6-dicarboxylate + H2O = (1E)-4-oxobut-1-ene-1,2,4-tricarboxylate + H(+). Strongly inhibited by 1 mM Zn(2+), Cu(2+), Mn(2+) and Co(2+) ions. Also inhibited by 5,5'-dithiobis(2-nitrobenzoic acid) (Ellman reagent) in vitro. Functionally, involved in the degradation of aromatic compounds via the protocatechuate 4,5-cleavage pathway. Catalyzes the hydrolysis of 2-pyrone-4,6-dicarboxylate (PDC) to oxalomesaconate (OMA). Also catalyzes the reverse reaction. In Comamonas testosteroni (Pseudomonas testosteroni), this protein is 2-pyrone-4,6-dicarbaxylate hydrolase.